The chain runs to 725 residues: Calcium-responsive transcription factor (725 aa).

Residues 572-592 (TSPDESPAVVSVNNQPSSSPS) form a disordered region. The segment covering 577–592 (SPAVVSVNNQPSSSPS) has biased composition (low complexity).

It is found in the nucleus. In terms of biological role, acts as a transcriptional activator that mediates the calcium- and neuron-selective induction of BDNF exon III transcription. Binds to the consensus calcium-response element CaRE1 5'-CTATTTCGAG-3' sequence. The polypeptide is Calcium-responsive transcription factor (CARF) (Homo sapiens (Human)).